Reading from the N-terminus, the 406-residue chain is Succinylornithine transaminase/acetylornithine aminotransferase (406 aa).

Pyridoxal 5'-phosphate-binding positions include 108–109 (GA) and Phe-141. N(2)-acetyl-L-ornithine is bound at residue Arg-144. 226–229 (DEVQ) contacts pyridoxal 5'-phosphate. Lys-255 is modified (N6-(pyridoxal phosphate)lysine). Residue Thr-283 participates in N(2)-acetyl-L-ornithine binding. Thr-284 contacts pyridoxal 5'-phosphate.

The protein belongs to the class-III pyridoxal-phosphate-dependent aminotransferase family. ArgD subfamily. Homodimer. Pyridoxal 5'-phosphate serves as cofactor.

The protein resides in the cytoplasm. It catalyses the reaction N(2)-succinyl-L-ornithine + 2-oxoglutarate = N-succinyl-L-glutamate 5-semialdehyde + L-glutamate. It carries out the reaction N(2)-acetyl-L-ornithine + 2-oxoglutarate = N-acetyl-L-glutamate 5-semialdehyde + L-glutamate. It functions in the pathway amino-acid biosynthesis; L-arginine biosynthesis; N(2)-acetyl-L-ornithine from L-glutamate: step 4/4. Its pathway is amino-acid degradation; L-arginine degradation via AST pathway; L-glutamate and succinate from L-arginine: step 3/5. Transaminates both N(2)-acetylornithine and N(2)-succinylornithine. The polypeptide is Succinylornithine transaminase/acetylornithine aminotransferase (aruC) (Pseudomonas aeruginosa (strain ATCC 15692 / DSM 22644 / CIP 104116 / JCM 14847 / LMG 12228 / 1C / PRS 101 / PAO1)).